Reading from the N-terminus, the 64-residue chain is Translation machinery-associated protein 7 homolog (64 aa).

The interval 1–64 (MSGREGGKKK…GGGIKKSGKK (64 aa)) is disordered. Residues 27-38 (MAFKQKQKEQQK) show a composition bias toward basic and acidic residues. Residues 27–50 (MAFKQKQKEQQKALEAAKANASKK) are a coiled coil. Positions 39–50 (ALEAAKANASKK) are enriched in low complexity. A compositionally biased stretch (gly residues) spans 53 to 64 (LVGGGIKKSGKK).

In Drosophila melanogaster (Fruit fly), this protein is Translation machinery-associated protein 7 homolog.